Reading from the N-terminus, the 1573-residue chain is Synaptojanin-1 (1573 aa).

Residues 119–442 form the SAC domain; sequence VRKVLNSGNF…GDSISKIYAG (324 aa). The interval 500–899 is catalytic; the sequence is GSLRVSEQTL…GPPDGTVLVS (400 aa). Ser-820 and Ser-830 each carry phosphoserine. One can recognise an RRM domain in the interval 902 to 971; sequence SSLPENNFFD…RTITIALKSP (70 aa). The segment covering 1029–1054 has biased composition (low complexity); it reads HLQPSSSSGLGTSPSSSPRTSPCQSP. 4 disordered regions span residues 1029–1322, 1341–1360, 1370–1463, and 1535–1573; these read HLQP…PLKI, SVQT…QLPS, VSCM…GFKD, and SRRP…FTER. Ser-1053 carries the phosphoserine modification. Residues 1108–1130 are compositionally biased toward pro residues; that stretch reads PPPPRPVAPPTRPAPPQRPPPPS. A phosphoserine mark is found at Ser-1150 and Ser-1178. An Omega-N-methylarginine modification is found at Arg-1201. Position 1220 is a phosphothreonine (Thr-1220). Residues 1221-1234 show a composition bias toward polar residues; it reads PESQSKTSETSKGS. A Phosphoserine modification is found at Ser-1292. Residues 1293–1304 show a composition bias toward low complexity; that stretch reads SHSLPSEASSQP. A compositionally biased stretch (basic and acidic residues) spans 1313–1322; that stretch reads DGKRESPLKI. Phosphoserine is present on residues Ser-1318 and Ser-1345. Position 1349 is a phosphothreonine (Thr-1349). The span at 1382-1407 shows a compositional bias: polar residues; the sequence is RSQSQENMRSSPNPFITGLTRTNPFS. Repeat copies occupy residues 1396-1398, 1406-1408, and 1417-1419. Residues 1396–1419 form a 3 X 3 AA repeats of N-P-F region; that stretch reads FITGLTRTNPFSDRTAAPGNPFRA. A compositionally biased stretch (pro residues) spans 1536–1555; the sequence is RRPPPPPVPLLPPGTSPPVD. 2 positions are modified to phosphoserine: Ser-1551 and Ser-1565.

The protein belongs to the synaptojanin family. This sequence in the central section; belongs to the inositol 1,4,5-trisphosphate 5-phosphatase family. As to quaternary structure, interacts with ASH/GRB2. Interacts with PACSIN1, PACSIN2 and PACSIN3. Interacts with AMPH, SH3GL1, SH3GL2 and SH3GL3. Interacts with MYO1E (via SH3 domain). Interacts with BIN1 and DNM1. Interacts with EPS15.

It localises to the cytoplasm. The protein resides in the perinuclear region. The catalysed reaction is a 1,2-diacyl-sn-glycero-3-phospho-(1D-myo-inositol-4,5-bisphosphate) + H2O = a 1,2-diacyl-sn-glycero-3-phospho-(1D-myo-inositol 4-phosphate) + phosphate. Its function is as follows. Phosphatase that acts on various phosphoinositides, including phosphatidylinositol 4-phosphate, phosphatidylinositol (4,5)-bisphosphate and phosphatidylinositol (3,4,5)-trisphosphate. Has a role in clathrin-mediated endocytosis. Hydrolyzes PIP2 bound to actin regulatory proteins resulting in the rearrangement of actin filaments downstream of tyrosine kinase and ASH/GRB2. The sequence is that of Synaptojanin-1 (SYNJ1) from Homo sapiens (Human).